Here is a 277-residue protein sequence, read N- to C-terminus: Urease accessory protein UreD (277 aa).

This sequence belongs to the UreD family. UreD, UreF and UreG form a complex that acts as a GTP-hydrolysis-dependent molecular chaperone, activating the urease apoprotein by helping to assemble the nickel containing metallocenter of UreC. The UreE protein probably delivers the nickel.

The protein localises to the cytoplasm. In terms of biological role, required for maturation of urease via the functional incorporation of the urease nickel metallocenter. This is Urease accessory protein UreD from Sinorhizobium medicae (strain WSM419) (Ensifer medicae).